The chain runs to 221 residues: Putative gene 53 protein (221 aa).

This is Putative gene 53 protein (53) from Bacillus phage SP01 (Bacteriophage SP01).